A 747-amino-acid polypeptide reads, in one-letter code: Kinesin-like protein KIF3B (747 aa).

Methionine 1 is modified (N-acetylmethionine). N-acetylserine; in Kinesin-like protein KIF3B, N-terminally processed is present on serine 2. A Kinesin motor domain is found at 9 to 340 (SVRVVVRCRP…LRYANRAKNI (332 aa)). 96 to 103 (GQTGTGKT) contributes to the ATP binding site. Positions 346–579 (VNEDPKDALL…EQTQNELTRE (234 aa)) form a coiled coil. 2 disordered regions span residues 374-412 (IGRR…DKDD) and 699-747 (QVDA…LVPK). Residues 393–411 (GEEEEEEGEEGEEEGDDKD) are compositionally biased toward acidic residues. A globular region spans residues 580-747 (LKLKHLIIEN…YPQSRGLVPK (168 aa)). Residues 701–710 (DASSFESTAN) show a composition bias toward polar residues. The segment covering 711–721 (KKSKARPKSGR) has biased composition (basic residues). The segment covering 722–735 (KSGSSSSSSGTPAS) has biased composition (low complexity).

This sequence belongs to the TRAFAC class myosin-kinesin ATPase superfamily. Kinesin family. Kinesin II subfamily. Heterodimer of KIF3A and KIF3B. KIF3A/KIF3B heterodimer interacts with KIFAP3 forming a heterotrimeric (KIF3A/KIF3B/KIFAP3) complex. Interacts directly with IFT20. Interacts with the SMC3 subunit of the cohesin complex. Interacts with FLCN.

It is found in the cytoplasm. Its subcellular location is the cytoskeleton. The protein resides in the cell projection. It localises to the cilium. The protein localises to the dendritic spine. Functionally, microtubule-based molecular motor that transport intracellular cargos, such as vesicles, organelles and protein complexes. Uses ATP hydrolysis to generate force to bind and move along the microtubule. Plays a role in cilia formation. Involved in photoreceptor integrity and opsin trafficking in rod photoreceptors. Transports vesicles containing N-methyl-D-aspartate (NMDA) receptor subunit GRIN2A into neuronal dendrites. The protein is Kinesin-like protein KIF3B (KIF3B) of Homo sapiens (Human).